The following is a 548-amino-acid chain: CTP synthase (548 aa).

Positions 1-270 (MNRRSCAFIF…DTKISALLGC (270 aa)) are amidoligase domain. Ser-17 is a binding site for CTP. A UTP-binding site is contributed by Ser-17. ATP contacts are provided by residues 18–23 (SIGKGL) and Asp-75. Residues Asp-75 and Glu-143 each contribute to the Mg(2+) site. CTP-binding positions include 150 to 152 (DIE), 190 to 195 (KTKPSQ), and Lys-227. Residues 190–195 (KTKPSQ) and Lys-227 contribute to the UTP site. The Glutamine amidotransferase type-1 domain maps to 305–548 (YSGLCDAYIS…VRAGLLRKYS (244 aa)). Gly-356 contributes to the L-glutamine binding site. The active-site Nucleophile; for glutamine hydrolysis is the Cys-383. L-glutamine contacts are provided by residues 384 to 387 (FGFQ), Glu-407, and Arg-475. Active-site residues include His-521 and Glu-523.

The protein belongs to the CTP synthase family. Homotetramer.

The catalysed reaction is UTP + L-glutamine + ATP + H2O = CTP + L-glutamate + ADP + phosphate + 2 H(+). It carries out the reaction L-glutamine + H2O = L-glutamate + NH4(+). It catalyses the reaction UTP + NH4(+) + ATP = CTP + ADP + phosphate + 2 H(+). The protein operates within pyrimidine metabolism; CTP biosynthesis via de novo pathway; CTP from UDP: step 2/2. With respect to regulation, allosterically activated by GTP, when glutamine is the substrate; GTP has no effect on the reaction when ammonia is the substrate. The allosteric effector GTP functions by stabilizing the protein conformation that binds the tetrahedral intermediate(s) formed during glutamine hydrolysis. Inhibited by the product CTP, via allosteric rather than competitive inhibition. Functionally, catalyzes the ATP-dependent amination of UTP to CTP with either L-glutamine or ammonia as the source of nitrogen. Regulates intracellular CTP levels through interactions with the four ribonucleotide triphosphates. The chain is CTP synthase from Neorickettsia sennetsu (strain ATCC VR-367 / Miyayama) (Ehrlichia sennetsu).